The chain runs to 241 residues: Leucyl/phenylalanyl-tRNA--protein transferase (241 aa).

This sequence belongs to the L/F-transferase family.

The protein localises to the cytoplasm. It carries out the reaction N-terminal L-lysyl-[protein] + L-leucyl-tRNA(Leu) = N-terminal L-leucyl-L-lysyl-[protein] + tRNA(Leu) + H(+). It catalyses the reaction N-terminal L-arginyl-[protein] + L-leucyl-tRNA(Leu) = N-terminal L-leucyl-L-arginyl-[protein] + tRNA(Leu) + H(+). The catalysed reaction is L-phenylalanyl-tRNA(Phe) + an N-terminal L-alpha-aminoacyl-[protein] = an N-terminal L-phenylalanyl-L-alpha-aminoacyl-[protein] + tRNA(Phe). In terms of biological role, functions in the N-end rule pathway of protein degradation where it conjugates Leu, Phe and, less efficiently, Met from aminoacyl-tRNAs to the N-termini of proteins containing an N-terminal arginine or lysine. The sequence is that of Leucyl/phenylalanyl-tRNA--protein transferase from Neisseria meningitidis serogroup A / serotype 4A (strain DSM 15465 / Z2491).